The chain runs to 215 residues: Probable phosphoglycerate mutase GpmB (215 aa).

Substrate is bound by residues 8–15 (RHGETQWN), 21–22 (QG), Arg-58, Arg-60, 82–85 (ELNM), 104–105 (RR), and 151–152 (GI). Residue His-9 is the Tele-phosphohistidine intermediate of the active site. Glu-82 serves as the catalytic Proton donor/acceptor.

It belongs to the phosphoglycerate mutase family. GpmB subfamily.

The catalysed reaction is (2R)-2-phosphoglycerate = (2R)-3-phosphoglycerate. The protein operates within carbohydrate degradation; glycolysis; pyruvate from D-glyceraldehyde 3-phosphate: step 3/5. The sequence is that of Probable phosphoglycerate mutase GpmB from Escherichia coli O1:K1 / APEC.